Here is a 244-residue protein sequence, read N- to C-terminus: MRSLILAVQFLTRLPTPQLRTFDPAWLAGAIRWFAVVGLLVGALVAALGWLGAWLDPWLAALLMLVTWVWVTGGLHLDGLGDLADGLGAAHRSPERFLAVLKDPHTGSFAVITLALQLLAKLVLLMLAVRHGVGWSALVLLPAWARLGAVWWTTLPPLSAGGHAERFAWRHDWPAFWLSWLLLAALSAWLAPVLLLAPVLWWGWRRFLWRRLGGMSGDCLGAGIELTETGLLLLAVVATRLPLA.

The next 5 membrane-spanning stretches (helical) occupy residues 33 to 53 (WFAV…WLGA), 57 to 77 (PWLA…GLHL), 109 to 129 (FAVI…MLAV), 132 to 152 (GVGW…AVWW), and 176 to 196 (FWLS…VLLL).

Belongs to the CobS family. Requires Mg(2+) as cofactor.

The protein localises to the cell inner membrane. It catalyses the reaction alpha-ribazole + adenosylcob(III)inamide-GDP = adenosylcob(III)alamin + GMP + H(+). It carries out the reaction alpha-ribazole 5'-phosphate + adenosylcob(III)inamide-GDP = adenosylcob(III)alamin 5'-phosphate + GMP + H(+). The protein operates within cofactor biosynthesis; adenosylcobalamin biosynthesis; adenosylcobalamin from cob(II)yrinate a,c-diamide: step 7/7. Functionally, joins adenosylcobinamide-GDP and alpha-ribazole to generate adenosylcobalamin (Ado-cobalamin). Also synthesizes adenosylcobalamin 5'-phosphate from adenosylcobinamide-GDP and alpha-ribazole 5'-phosphate. In Laribacter hongkongensis (strain HLHK9), this protein is Adenosylcobinamide-GDP ribazoletransferase.